The primary structure comprises 506 residues: Chromodomain Y-like protein 2 (506 aa).

The 61-residue stretch at Tyr-7–Lys-67 folds into the Chromo domain. Positions Lys-64–Pro-177 are disordered. Over residues Lys-88–Lys-98 the composition is skewed to basic and acidic residues. The span at Gly-101–Tyr-120 shows a compositional bias: basic residues. The span at Lys-133–Gly-143 shows a compositional bias: polar residues.

As to quaternary structure, interacts (via chromo domain) with histone H3K9me3. As to expression, ubiquitously expressed.

It localises to the nucleus. The sequence is that of Chromodomain Y-like protein 2 (CDYL2) from Homo sapiens (Human).